A 566-amino-acid polypeptide reads, in one-letter code: Beta,beta-carotene 15,15'-dioxygenase (566 aa).

Residues H172, H237, H308, and H514 each contribute to the Fe cation site. The tract at residues 529 to 566 is disordered; sequence TPAKTQEDENSDHPTGLTAPGLGHGENDFTAGHGGKSL.

It belongs to the carotenoid oxygenase family. Requires Fe(2+) as cofactor.

The protein localises to the cytoplasm. It localises to the cytosol. The enzyme catalyses all-trans-beta-carotene + O2 = 2 all-trans-retinal. It functions in the pathway cofactor metabolism; retinol metabolism. In terms of biological role, symmetrically cleaves beta-carotene into two molecules of retinal using a dioxygenase mechanism. This chain is Beta,beta-carotene 15,15'-dioxygenase, found in Rattus norvegicus (Rat).